A 704-amino-acid polypeptide reads, in one-letter code: Elongation factor G 1 (704 aa).

A tr-type G domain is found at 8–291 (ERYRNIGISA…AVIDYLPSPA (284 aa)). Residues 17 to 24 (AHIDAGKT), 88 to 92 (DTPGH), and 142 to 145 (NKMD) each bind GTP.

The protein belongs to the TRAFAC class translation factor GTPase superfamily. Classic translation factor GTPase family. EF-G/EF-2 subfamily.

It localises to the cytoplasm. Its function is as follows. Catalyzes the GTP-dependent ribosomal translocation step during translation elongation. During this step, the ribosome changes from the pre-translocational (PRE) to the post-translocational (POST) state as the newly formed A-site-bound peptidyl-tRNA and P-site-bound deacylated tRNA move to the P and E sites, respectively. Catalyzes the coordinated movement of the two tRNA molecules, the mRNA and conformational changes in the ribosome. This Burkholderia mallei (strain ATCC 23344) protein is Elongation factor G 1.